The primary structure comprises 96 residues: Putative pterin-4-alpha-carbinolamine dehydratase (96 aa).

The protein belongs to the pterin-4-alpha-carbinolamine dehydratase family.

It catalyses the reaction (4aS,6R)-4a-hydroxy-L-erythro-5,6,7,8-tetrahydrobiopterin = (6R)-L-erythro-6,7-dihydrobiopterin + H2O. This chain is Putative pterin-4-alpha-carbinolamine dehydratase, found in Synechocystis sp. (strain ATCC 27184 / PCC 6803 / Kazusa).